The sequence spans 567 residues: Protein phosphatase 1 regulatory inhibitor subunit 16B (567 aa).

Residues 15-55 (EKVPTLERLRAAQKRRAQQLKKWAQYEQDLQHRKRKHERKR) are a coiled coil. At serine 69 the chain carries Phosphoserine. ANK repeat units lie at residues 100–129 (DGLTALHQCCIDNFEEIVKLLLSHGANVNA), 133–162 (ELWTPLHAAATCGHINLVKILVQYGADLLA), 228–257 (QGATLLHIAGANGYLRAAELLLDHGVRVDV), and 261–290 (DGWEPLHAAAFWGQMQMAELLVSHGASLSA). A phosphoserine mark is found at serine 333, serine 337, and serine 350. The tract at residues 378-403 (RTSTYNGDIRETRTDQENKDPNPRLE) is disordered. The span at 385–403 (DIRETRTDQENKDPNPRLE) shows a compositional bias: basic and acidic residues. Serine 476 carries the post-translational modification Phosphoserine. Residues 504-515 (SSMARTGESSSE) are compositionally biased toward polar residues. The segment at 504-525 (SSMARTGESSSEGKAPLIGGRT) is disordered. The stretch at 530-559 (SNGTSVYYTVTSGDPPLLKFKAPIEEMEEK) is one ANK 5 repeat. A lipid anchor (S-palmitoyl cysteine) is attached at cysteine 563. Cysteine methyl ester is present on cysteine 564. A lipid anchor (S-farnesyl cysteine) is attached at cysteine 564. Residues 565–567 (RIS) constitute a propeptide, removed in mature form.

Interacts with PPP1CA, PPP1CB and MSN. Interacts (via its fourth ankyrin repeat) with the mature dimeric form of RPSA/LAMR1. Interacts with EEF1A1. Interacts with PTEN. Interacts with ECE1. Post-translationally, phosphorylated by PKA and, after PKA priming, by GSK3B. Phosphorylation by GSK3B reduces its association with PP1C and enhances PP1C activity. Dephosphorylation by its associated PP1C results in enhanced association with PP1C, but reduced PP1C activity.

It localises to the cell membrane. It is found in the nucleus. The protein resides in the cell projection. Its function is as follows. Regulator of protein phosphatase 1 (PP1) that acts as a positive regulator of pulmonary endothelial cell (EC) barrier function. Involved in the regulation of the PI3K/AKT signaling pathway, angiogenesis and endothelial cell proliferation. Regulates angiogenesis and endothelial cell proliferation through the control of ECE1 dephosphorylation, trafficking and activity. Protects the endothelial barrier from lipopolysaccharide (LPS)-induced vascular leakage. Involved in the regulation of endothelial cell filopodia extension. May be a downstream target for TGF-beta1 signaling cascade in endothelial cells. Involved in PKA-mediated moesin dephosphorylation which is important in EC barrier protection against thrombin stimulation. Promotes the interaction of PPP1CA with RPSA/LAMR1 and in turn facilitates the dephosphorylation of RPSA/LAMR1. Involved in the dephosphorylation of EEF1A1. In Homo sapiens (Human), this protein is Protein phosphatase 1 regulatory inhibitor subunit 16B (PPP1R16B).